The primary structure comprises 496 residues: 1-aminocyclopropane-1-carboxylate synthase 4 (496 aa).

K300 is modified (N6-(pyridoxal phosphate)lysine).

The protein belongs to the class-I pyridoxal-phosphate-dependent aminotransferase family. Pyridoxal 5'-phosphate serves as cofactor. As to expression, expressed in leaves. Expressed in shoots and leaf blades. Expressed at low levels in leaf sheaths.

The catalysed reaction is S-adenosyl-L-methionine = 1-aminocyclopropane-1-carboxylate + S-methyl-5'-thioadenosine + H(+). It participates in alkene biosynthesis; ethylene biosynthesis via S-adenosyl-L-methionine; ethylene from S-adenosyl-L-methionine: step 1/2. Its function is as follows. Catalyzes the formation of 1-aminocyclopropane-1-carboxylate, a direct precursor of ethylene in higher plants. This chain is 1-aminocyclopropane-1-carboxylate synthase 4, found in Oryza sativa subsp. japonica (Rice).